Consider the following 263-residue polypeptide: 3-methyl-2-oxobutanoate hydroxymethyltransferase (263 aa).

The Mg(2+) site is built by D45 and D84. 3-methyl-2-oxobutanoate contacts are provided by residues 45–46 (DS), D84, and K112. E114 provides a ligand contact to Mg(2+). E181 acts as the Proton acceptor in catalysis.

The protein belongs to the PanB family. Homodecamer; pentamer of dimers. Mg(2+) is required as a cofactor.

It is found in the cytoplasm. It carries out the reaction 3-methyl-2-oxobutanoate + (6R)-5,10-methylene-5,6,7,8-tetrahydrofolate + H2O = 2-dehydropantoate + (6S)-5,6,7,8-tetrahydrofolate. The protein operates within cofactor biosynthesis; (R)-pantothenate biosynthesis; (R)-pantoate from 3-methyl-2-oxobutanoate: step 1/2. Catalyzes the reversible reaction in which hydroxymethyl group from 5,10-methylenetetrahydrofolate is transferred onto alpha-ketoisovalerate to form ketopantoate. The protein is 3-methyl-2-oxobutanoate hydroxymethyltransferase of Buchnera aphidicola subsp. Acyrthosiphon pisum (strain APS) (Acyrthosiphon pisum symbiotic bacterium).